A 120-amino-acid chain; its full sequence is FK506-binding protein 1B (120 aa).

The segment at 1–26 is disordered; the sequence is MGLEKQTLRMGNGKDHPQPGDPVELN. In terms of domain architecture, PPIase FKBP-type spans 20–115; the sequence is GDPVELNYTG…VFEVELLKIK (96 aa).

It belongs to the FKBP-type PPIase family. FKBP1 subfamily.

It catalyses the reaction [protein]-peptidylproline (omega=180) = [protein]-peptidylproline (omega=0). Inhibited by both FK506 and rapamycin. PPIases accelerate the folding of proteins. It catalyzes the cis-trans isomerization of proline imidic peptide bonds in oligopeptides. The chain is FK506-binding protein 1B (fpr1B) from Aspergillus fumigatus (strain ATCC MYA-4609 / CBS 101355 / FGSC A1100 / Af293) (Neosartorya fumigata).